A 278-amino-acid chain; its full sequence is Phage-like element PBSX protein XkdB (278 aa).

The segment at residues 58–80 is a DNA-binding region (H-T-H motif); that stretch reads LKAREMAAVFGVSEKTVRRWLEL. 2 disordered regions span residues 117 to 136 and 239 to 278; these read SLKE…RTDI and QHER…RKQV. Residues 248-263 are compositionally biased toward basic and acidic residues; it reads KTNNRTDFGRAEKRET.

To B.subtilis YqaL.

The sequence is that of Phage-like element PBSX protein XkdB (xkdB) from Bacillus subtilis (strain 168).